Consider the following 564-residue polypeptide: Nucleoprotein (564 aa).

A binding site for the cap structure m7GTP region spans residues 54–236; sequence LRKNKRGEED…VTKDESSINI (183 aa). Mn(2+) is bound by residues Asp380 and Glu382. Zn(2+)-binding residues include Glu390, Cys497, His500, and Cys525. A Mn(2+)-binding site is contributed by Asp529.

This sequence belongs to the arenaviridae nucleocapsid protein family. Homomultimerizes to form the nucleocapsid. Binds to viral genomic RNA. Interacts with glycoprotein G2. Interacts with protein Z; this interaction probably directs the encapsidated genome to budding sites. Interacts with protein L; this interaction does not interfere with Z-L interaction. Interacts with host IKBKE (via Protein kinase domain); the interaction inhibits IKBKE kinase activity.

It localises to the virion. Its subcellular location is the host cytoplasm. In terms of biological role, encapsidates the genome, protecting it from nucleases. The encapsidated genomic RNA is termed the nucleocapsid (NC). Serves as template for viral transcription and replication. The increased presence of protein N in host cell does not seem to trigger the switch from transcription to replication as observed in other negative strain RNA viruses. Through the interaction with host IKBKE, strongly inhibits the phosphorylation and nuclear translocation of host IRF3, a protein involved in interferon activation pathway, leading to the inhibition of interferon-beta and IRF3-dependent promoters activation. Also encodes a functional 3'-5' exoribonuclease that degrades preferentially dsRNA substrates and thereby participates in the suppression of interferon induction. The chain is Nucleoprotein from Calomys callosus (Large vesper mouse).